Reading from the N-terminus, the 481-residue chain is Fibrinogen beta chain (481 aa).

The N-terminal stretch at 1–19 (MRHLWLLLLLCVFSVQTQA) is a signal peptide. Residues 22–81 (DDYDEPTDSLDARGHRPVDRRKEEPPSLRPAPPPISGGGYRARPAKATANQKKVERRPPD) form a disordered region. Basic and acidic residues predominate over residues 31-47 (LDARGHRPVDRRKEEPP). The interval 35–37 (GHR) is beta-chain polymerization, binding distal domain of another fibrin. Residues 149–213 (QAQVKENENV…SDISAQMEYC (65 aa)) adopt a coiled-coil conformation. 2 disulfides stabilise this stretch: cysteine 221/cysteine 306 and cysteine 231/cysteine 260. Positions 222-478 (NIPVVSGKEC…RMSMKIRPFF (257 aa)) constitute a Fibrinogen C-terminal domain. Asparagine 384 carries N-linked (GlcNAc...) asparagine glycosylation. A disulfide bond links cysteine 414 and cysteine 427.

In terms of assembly, heterohexamer; disulfide linked. Contains 2 sets of 3 non-identical chains (alpha, beta and gamma). The 2 heterotrimers are in head to head conformation with the N-termini in a small central domain. Post-translationally, conversion of fibrinogen to fibrin is triggered by thrombin, which cleaves fibrinopeptides A and B from alpha and beta chains, and thus exposes the N-terminal polymerization sites responsible for the formation of the soft clot.

It localises to the secreted. Its function is as follows. Cleaved by the protease thrombin to yield monomers which, together with fibrinogen alpha (FGA) and fibrinogen gamma (FGG), polymerize to form an insoluble fibrin matrix. Fibrin has a major function in hemostasis as one of the primary components of blood clots. In addition, functions during the early stages of wound repair to stabilize the lesion and guide cell migration during re-epithelialization. Was originally thought to be essential for platelet aggregation, based on in vitro studies using anticoagulated blood. However, subsequent studies have shown that it is not absolutely required for thrombus formation in vivo. Enhances expression of SELP in activated platelets via an ITGB3-dependent pathway. Maternal fibrinogen is essential for successful pregnancy. Fibrin deposition is also associated with infection, where it protects against IFNG-mediated hemorrhage. May also facilitate the immune response via both innate and T-cell mediated pathways. The chain is Fibrinogen beta chain (Fgb) from Mus musculus (Mouse).